Reading from the N-terminus, the 411-residue chain is Zinc finger protein draculin (411 aa).

Positions 1–33 (MKNTTKPCRTEHHNAEGQRDRMEGNKKGETKAK) are disordered. Residues 8 to 32 (CRTEHHNAEGQRDRMEGNKKGETKA) are compositionally biased toward basic and acidic residues. C2H2-type zinc fingers lie at residues 36–58 (VACS…MRVH), 64–86 (YRCD…LDIH), 92–114 (YTCD…MTLH), 120–142 (YKCD…MKLH), 148–170 (HKCE…LMVH), 176–198 (YTCD…MNIH), 204–226 (YTCD…MRFH), 232–254 (FTCD…MKIH), 260–282 (YTCD…MTHH), 288–310 (FHCD…IKTH), 316–338 (YSCL…EKRH), 344–366 (FMCF…LPVH), and 372–394 (YMCS…EKTH).

As to expression, specifically expressed in the hematopoietic lineage during embryogenesis; first expressed at the late blastula stage around the blastoderm margin. During gastrulation, restricted to the ventral mesoderm, the presumptive prechordal plate and the dorso-marginal cells of the organizer. At the 3-somite stage, strongly expressed in a caudal domain (marking the erythroid lineage) and a cephalic domain of the lateral mesoderm. At the 8- to 10-somite stage, caudal expression is in two bands of lateral mesoderm which later converge at the midline. Anterior expression is also in two bands of lateral mesoderm which converge as two patches at the midline by the 15-somite stage, with increased scattering of single cells (macrophage precursors) away from the midline to the yolksac. Once at the yolksac, expression is lost. By 20-24 hours post-fertilization (hpf), expressed in proerythroblasts in the erythroid blood island centered above the uro-genital opening. Expression persists in circulating erythroblasts but is lost in mature erythrocytes.

This Danio rerio (Zebrafish) protein is Zinc finger protein draculin.